Consider the following 855-residue polypeptide: Lon protease (855 aa).

The region spanning 45-288 is the Lon N-terminal domain; sequence IYLLTVKNVV…ETFRFLNIEY (244 aa). Residue 439–446 participates in ATP binding; it reads GPPGVGKT. Residues 674–855 enclose the Lon proteolytic domain; sequence IQVPGVVTGL…NEVIDLSIIK (182 aa). Residues serine 761 and lysine 804 contribute to the active site.

Belongs to the peptidase S16 family. Homohexamer. Organized in a ring with a central cavity.

Its subcellular location is the cytoplasm. It catalyses the reaction Hydrolysis of proteins in presence of ATP.. ATP-dependent serine protease that mediates the selective degradation of mutant and abnormal proteins as well as certain short-lived regulatory proteins. Required for cellular homeostasis and for survival from DNA damage and developmental changes induced by stress. Degrades polypeptides processively to yield small peptide fragments that are 5 to 10 amino acids long. Binds to DNA in a double-stranded, site-specific manner. The sequence is that of Lon protease from Karelsulcia muelleri (strain GWSS) (Sulcia muelleri).